A 416-amino-acid chain; its full sequence is Serine/threonine-protein phosphatase PP2A-like PPG1 (416 aa).

Residues Asp-62, His-64, Asp-90, and Asn-122 each contribute to the Mn(2+) site. His-123 serves as the catalytic Proton donor. Mn(2+) is bound by residues His-173 and His-248. The segment at 363 to 391 (EDTLQGKSVNGINFDDELSTSDDTSGSGG) is disordered.

This sequence belongs to the PPP phosphatase family. PP-2A subfamily. The cofactor is Mn(2+).

The catalysed reaction is O-phospho-L-seryl-[protein] + H2O = L-seryl-[protein] + phosphate. The enzyme catalyses O-phospho-L-threonyl-[protein] + H2O = L-threonyl-[protein] + phosphate. With respect to regulation, inhibited by okadaic acid, a specific inhibitor of serine/threonine phosphatases of types 1, 2A and 2B. Its function is as follows. Serine/threonine-protein phosphatase that plays an important role in controlling colony morphology, filament extension and agar invasion. Down-regulates expression of NRG1 and affects the expression of multiple filament-specific transcripts in response to serum and 37 degrees Celsius. Plays a crucial role in virulence in a mouse model of systemic candidiasis. In Candida albicans (strain SC5314 / ATCC MYA-2876) (Yeast), this protein is Serine/threonine-protein phosphatase PP2A-like PPG1.